A 285-amino-acid polypeptide reads, in one-letter code: MASLREIRKRLQSIQNIQQLTKAMEMVAASRLHQVQIKVKQAKPYVVKLSEILDRLSQITQDIKHPLLEQREVKKVGVVIVAADMGLSGPYNKDIFSAANKFLKTYAQEQVELILVGKKATDYYKKRPWNIRFEFGEWGEKLTSHQIKTFANQLMSWFLIGELDEIWLVYTHYVTMMTRKVMVEKFLNIQQISPKSEKSPVDYIFEPNPKQIYGAILFNYCMTKFQSILNESYASELAARIFAMKAATSNADDMIEKLTLVRNKVRQAGITKEMLEITSGAEGLK.

It belongs to the ATPase gamma chain family. As to quaternary structure, F-type ATPases have 2 components, CF(1) - the catalytic core - and CF(0) - the membrane proton channel. CF(1) has five subunits: alpha(3), beta(3), gamma(1), delta(1), epsilon(1). CF(0) has three main subunits: a, b and c.

The protein resides in the cell inner membrane. Functionally, produces ATP from ADP in the presence of a proton gradient across the membrane. The gamma chain is believed to be important in regulating ATPase activity and the flow of protons through the CF(0) complex. The chain is ATP synthase gamma chain from Protochlamydia amoebophila (strain UWE25).